A 266-amino-acid polypeptide reads, in one-letter code: Putative carbamate hydrolase RutD (266 aa).

The protein belongs to the AB hydrolase superfamily. Hydrolase RutD family.

It carries out the reaction carbamate + 2 H(+) = NH4(+) + CO2. In terms of biological role, involved in pyrimidine catabolism. May facilitate the hydrolysis of carbamate, a reaction that can also occur spontaneously. The sequence is that of Putative carbamate hydrolase RutD from Escherichia coli O103:H2 (strain 12009 / EHEC).